A 183-amino-acid polypeptide reads, in one-letter code: NADH-quinone oxidoreductase subunit A (183 aa).

The next 3 membrane-spanning stretches (helical) occupy residues Ile11–Leu31, Phe63–Trp83, and Val98–Leu118. The interval Thr159–Glu183 is disordered.

Belongs to the complex I subunit 3 family. NDH-1 is composed of 14 different subunits. Subunits NuoA, H, J, K, L, M, N constitute the membrane sector of the complex.

It localises to the cell inner membrane. The catalysed reaction is a quinone + NADH + 5 H(+)(in) = a quinol + NAD(+) + 4 H(+)(out). NDH-1 shuttles electrons from NADH, via FMN and iron-sulfur (Fe-S) centers, to quinones in the respiratory chain. The immediate electron acceptor for the enzyme in this species is believed to be ubiquinone. Couples the redox reaction to proton translocation (for every two electrons transferred, four hydrogen ions are translocated across the cytoplasmic membrane), and thus conserves the redox energy in a proton gradient. This is NADH-quinone oxidoreductase subunit A from Acinetobacter baumannii (strain ACICU).